The sequence spans 476 residues: Viral inhibitor of caspase-8-induced apoptosis (476 aa).

This sequence belongs to the herpesviridae US22 family. As to quaternary structure, interacts with host pro-caspase-8/CASP8; this interaction inhibits CASP8 activation.

In terms of biological role, plays a role in the inhibition of apoptosis by interacting with the pro-domain of pro-caspase-8/CASP8 and thus preventing its activation. This is Viral inhibitor of caspase-8-induced apoptosis (UL36) from Human cytomegalovirus (strain Merlin) (HHV-5).